The primary structure comprises 76 residues: UPF0291 protein GWCH70_1239 (76 aa).

A disordered region spans residues 54-76; the sequence is VIDPNGNDVTPKKLKESQKSRLH. The span at 63–76 shows a compositional bias: basic and acidic residues; the sequence is TPKKLKESQKSRLH.

Belongs to the UPF0291 family.

It localises to the cytoplasm. The chain is UPF0291 protein GWCH70_1239 from Geobacillus sp. (strain WCH70).